Consider the following 101-residue polypeptide: Small ribosomal subunit protein uS17 (101 aa).

This sequence belongs to the universal ribosomal protein uS17 family. As to quaternary structure, part of the 30S ribosomal subunit.

Functionally, one of the primary rRNA binding proteins, it binds specifically to the 5'-end of 16S ribosomal RNA. This is Small ribosomal subunit protein uS17 from Leifsonia xyli subsp. xyli (strain CTCB07).